A 620-amino-acid polypeptide reads, in one-letter code: Translation initiation factor IF-2 (620 aa).

The region spanning Glu-119–Leu-288 is the tr-type G domain. The tract at residues Gly-128–Thr-135 is G1. Gly-128–Thr-135 serves as a coordination point for GTP. The segment at Gly-153–Ala-157 is G2. The interval Asp-175 to Gly-178 is G3. Residues Asp-175 to His-179 and Asn-229 to Asp-232 contribute to the GTP site. The G4 stretch occupies residues Asn-229–Asp-232. Positions Ser-265 to Ile-267 are G5.

It belongs to the TRAFAC class translation factor GTPase superfamily. Classic translation factor GTPase family. IF-2 subfamily.

The protein localises to the cytoplasm. Its function is as follows. One of the essential components for the initiation of protein synthesis. Protects formylmethionyl-tRNA from spontaneous hydrolysis and promotes its binding to the 30S ribosomal subunits. Also involved in the hydrolysis of GTP during the formation of the 70S ribosomal complex. This chain is Translation initiation factor IF-2, found in Mycoplasma mycoides subsp. mycoides SC (strain CCUG 32753 / NCTC 10114 / PG1).